Reading from the N-terminus, the 161-residue chain is 2-C-methyl-D-erythritol 2,4-cyclodiphosphate synthase (161 aa).

Residues Asp-9 and His-11 each coordinate a divalent metal cation. 4-CDP-2-C-methyl-D-erythritol 2-phosphate contacts are provided by residues 9–11 and 37–38; these read DFH and HS. Position 45 (His-45) interacts with a divalent metal cation. 4-CDP-2-C-methyl-D-erythritol 2-phosphate-binding positions include 59–61, 64–68, 135–138, and Arg-145; these read DIG, FPDTD, and TTTE.

It belongs to the IspF family. As to quaternary structure, homotrimer. The cofactor is a divalent metal cation.

It carries out the reaction 4-CDP-2-C-methyl-D-erythritol 2-phosphate = 2-C-methyl-D-erythritol 2,4-cyclic diphosphate + CMP. It functions in the pathway isoprenoid biosynthesis; isopentenyl diphosphate biosynthesis via DXP pathway; isopentenyl diphosphate from 1-deoxy-D-xylulose 5-phosphate: step 4/6. Functionally, involved in the biosynthesis of isopentenyl diphosphate (IPP) and dimethylallyl diphosphate (DMAPP), two major building blocks of isoprenoid compounds. Catalyzes the conversion of 4-diphosphocytidyl-2-C-methyl-D-erythritol 2-phosphate (CDP-ME2P) to 2-C-methyl-D-erythritol 2,4-cyclodiphosphate (ME-CPP) with a corresponding release of cytidine 5-monophosphate (CMP). This Leptospira interrogans serogroup Icterohaemorrhagiae serovar Lai (strain 56601) protein is 2-C-methyl-D-erythritol 2,4-cyclodiphosphate synthase.